A 142-amino-acid polypeptide reads, in one-letter code: Hemoglobin subunit alpha (142 aa).

The Globin domain occupies 2–142 (KLSAEDKHNV…VGHVLTSKYR (141 aa)). Residue His-59 participates in O2 binding. A heme b-binding site is contributed by His-88.

It belongs to the globin family. Heterotetramer of two alpha chains and two beta chains. In terms of tissue distribution, red blood cells.

Its function is as follows. Involved in oxygen transport from the lung to the various peripheral tissues. The sequence is that of Hemoglobin subunit alpha (HBA) from Taricha granulosa (Roughskin newt).